Reading from the N-terminus, the 522-residue chain is Peptide methionine sulfoxide reductase MsrA/MsrB (522 aa).

Residues 17 to 174 enclose the Thioredoxin domain; sequence LALGACSPKI…ALALIRDPNA (158 aa). The cysteines at positions 68 and 71 are disulfide-linked. The interval 199-354 is peptide methionine sulfoxide reductase A; sequence RTIYLAGGCF…PNGYCHIDIR (156 aa). The active site involves cysteine 207. Residues 383–506 enclose the MsrB domain; it reads DAELKRTLTE…NGASLKFIPL (124 aa). The cysteines at positions 440 and 495 are disulfide-linked. The Nucleophile role is filled by cysteine 495.

This sequence in the N-terminal section; belongs to the thioredoxin family. In the central section; belongs to the MsrA Met sulfoxide reductase family. The protein in the C-terminal section; belongs to the MsrB Met sulfoxide reductase family.

The enzyme catalyses L-methionyl-[protein] + [thioredoxin]-disulfide + H2O = L-methionyl-(S)-S-oxide-[protein] + [thioredoxin]-dithiol. The catalysed reaction is [thioredoxin]-disulfide + L-methionine + H2O = L-methionine (S)-S-oxide + [thioredoxin]-dithiol. It carries out the reaction L-methionyl-[protein] + [thioredoxin]-disulfide + H2O = L-methionyl-(R)-S-oxide-[protein] + [thioredoxin]-dithiol. Its function is as follows. Has an important function as a repair enzyme for proteins that have been inactivated by oxidation. Catalyzes the reversible oxidation-reduction of methionine sulfoxide in proteins to methionine. This chain is Peptide methionine sulfoxide reductase MsrA/MsrB (msrAB), found in Neisseria meningitidis serogroup B (strain ATCC BAA-335 / MC58).